The following is a 163-amino-acid chain: Cyanate hydratase (163 aa).

Catalysis depends on residues R103, E106, and S129.

Belongs to the cyanase family.

The catalysed reaction is cyanate + hydrogencarbonate + 3 H(+) = NH4(+) + 2 CO2. In terms of biological role, catalyzes the reaction of cyanate with bicarbonate to produce ammonia and carbon dioxide. The sequence is that of Cyanate hydratase from Ajellomyces capsulatus (strain H143) (Darling's disease fungus).